The primary structure comprises 253 residues: Regulatory protein VirG (253 aa).

The Response regulatory domain maps to 15–129 (HVLVIDDDVA…EFLARIRVAL (115 aa)). Asp-64 is modified (4-aspartylphosphate). The ompR/PhoB-type DNA-binding region spans 141-241 (RRSFSFADWT…ARGAGYFFDA (101 aa)).

In terms of processing, phosphorylated by wide host range (WHR) VirA protein.

Its subcellular location is the cytoplasm. In terms of biological role, virG is required for the positive regulation of at least two vir loci encoded by the Ti plasmid of A.tumefaciens. This Agrobacterium fabrum (strain C58 / ATCC 33970) (Agrobacterium tumefaciens (strain C58)) protein is Regulatory protein VirG (virG).